The chain runs to 192 residues: Peptidyl-tRNA hydrolase (192 aa).

Tyr-14 contacts tRNA. Residue His-19 is the Proton acceptor of the active site. 3 residues coordinate tRNA: Tyr-64, Asn-66, and Asn-112.

This sequence belongs to the PTH family. In terms of assembly, monomer.

The protein localises to the cytoplasm. It catalyses the reaction an N-acyl-L-alpha-aminoacyl-tRNA + H2O = an N-acyl-L-amino acid + a tRNA + H(+). Hydrolyzes ribosome-free peptidyl-tRNAs (with 1 or more amino acids incorporated), which drop off the ribosome during protein synthesis, or as a result of ribosome stalling. In terms of biological role, catalyzes the release of premature peptidyl moieties from peptidyl-tRNA molecules trapped in stalled 50S ribosomal subunits, and thus maintains levels of free tRNAs and 50S ribosomes. The polypeptide is Peptidyl-tRNA hydrolase (Anaeromyxobacter dehalogenans (strain 2CP-C)).